The following is a 305-amino-acid chain: MSKAVSEILGYMYIFGIVMAVLAIVFVQVNTMTEDMKRSVMSQSLEQSFKKIQYIIHSVSFGEVPSQAVEIELQGGTLTLDKSDPEFIVAFVNYTETNPSNLPCGRVPNSVPLCINLSTGRLYTACTHTGYNFSACTLNHTIGKIVYRYKDWFLTLEAGSVFSKYSNQDYSKLLYEPRILYNATLSTPGKRFLVMTIPLLDGELSIGGSGRFRFVLNEGNSNVSLISVSNLGQDFNDAYVILRGTENKDAWCRFFERSGDVFNTTLDDTKTSYRRCSNSENAMASIKLSNVHEIIVIFRQVLFST.

A signal peptide spans 1–29; the sequence is MSKAVSEILGYMYIFGIVMAVLAIVFVQV.

This is an uncharacterized protein from Archaeoglobus fulgidus (strain ATCC 49558 / DSM 4304 / JCM 9628 / NBRC 100126 / VC-16).